Consider the following 414-residue polypeptide: ORC1-type DNA replication protein 11 (414 aa).

ATP is bound by residues 60 to 64 (VGKTA), Y207, and R219.

Belongs to the CDC6/cdc18 family.

Involved in regulation of DNA replication. In Haloarcula marismortui (strain ATCC 43049 / DSM 3752 / JCM 8966 / VKM B-1809) (Halobacterium marismortui), this protein is ORC1-type DNA replication protein 11 (cdc6k).